A 767-amino-acid polypeptide reads, in one-letter code: Photosystem I P700 chlorophyll a apoprotein A1 (767 aa).

8 consecutive transmembrane segments (helical) span residues 72 to 95 (IFSA…FHGA), 158 to 181 (LMSL…FHYH), 197 to 221 (LNHH…HVSL), 305 to 323 (IAHH…GHMY), 364 to 387 (WHAQ…QHMY), 403 to 429 (IGLF…IAMI), 451 to 473 (ALIS…LYIH), and 548 to 566 (FMVH…LILL). [4Fe-4S] cluster contacts are provided by cysteine 590 and cysteine 599. 2 helical membrane passes run 606-627 (HVFL…HFSW) and 681-703 (TSAY…MFLF). Chlorophyll a' is bound at residue histidine 692. Chlorophyll a is bound by residues methionine 700 and tyrosine 708. Tryptophan 709 provides a ligand contact to phylloquinone. A helical transmembrane segment spans residues 741-761 (AVGVAHYLLGGIATTWAFFHA).

This sequence belongs to the PsaA/PsaB family. The PsaA/B heterodimer binds the P700 chlorophyll special pair and subsequent electron acceptors. PSI consists of a core antenna complex that captures photons, and an electron transfer chain that converts photonic excitation into a charge separation. The cyanobacterial PSI reaction center is composed of one copy each of PsaA,B,C,D,E,F,I,J,K,L,M and X, and forms trimeric complexes. Requires PSI electron transfer chain: 5 chlorophyll a, 1 chlorophyll a', 2 phylloquinones and 3 4Fe-4S clusters. PSI core antenna: 90 chlorophyll a, 22 carotenoids, 3 phospholipids and 1 galactolipid. P700 is a chlorophyll a/chlorophyll a' dimer, A0 is one or more chlorophyll a, A1 is one or both phylloquinones and FX is a shared 4Fe-4S iron-sulfur center. as cofactor.

The protein localises to the cellular thylakoid membrane. It carries out the reaction reduced [plastocyanin] + hnu + oxidized [2Fe-2S]-[ferredoxin] = oxidized [plastocyanin] + reduced [2Fe-2S]-[ferredoxin]. Its function is as follows. PsaA and PsaB bind P700, the primary electron donor of photosystem I (PSI), as well as the electron acceptors A0, A1 and FX. PSI is a plastocyanin/cytochrome c6-ferredoxin oxidoreductase, converting photonic excitation into a charge separation, which transfers an electron from the donor P700 chlorophyll pair to the spectroscopically characterized acceptors A0, A1, FX, FA and FB in turn. Oxidized P700 is reduced on the lumenal side of the thylakoid membrane by plastocyanin or cytochrome c6. The protein is Photosystem I P700 chlorophyll a apoprotein A1 of Synechococcus sp. (strain WH7803).